The chain runs to 224 residues: DNA repair and recombination protein RadB (224 aa).

This sequence belongs to the eukaryotic RecA-like protein family. RadB subfamily.

In terms of biological role, involved in DNA repair and in homologous recombination. May regulate the cleavage reactions of the branch-structured DNA. Has a very weak ATPase activity that is not stimulated by DNA. Binds DNA but does not promote DNA strands exchange. The protein is DNA repair and recombination protein RadB of Methanoculleus marisnigri (strain ATCC 35101 / DSM 1498 / JR1).